A 255-amino-acid polypeptide reads, in one-letter code: Large ribosomal subunit protein uL4 (255 aa).

This sequence belongs to the universal ribosomal protein uL4 family. As to quaternary structure, part of the 50S ribosomal subunit.

Functionally, one of the primary rRNA binding proteins, this protein initially binds near the 5'-end of the 23S rRNA. It is important during the early stages of 50S assembly. It makes multiple contacts with different domains of the 23S rRNA in the assembled 50S subunit and ribosome. Forms part of the polypeptide exit tunnel. The protein is Large ribosomal subunit protein uL4 of Thermococcus gammatolerans (strain DSM 15229 / JCM 11827 / EJ3).